The sequence spans 835 residues: Transcription intermediary factor 1-beta (835 aa).

The span at 1–19 (MAASAAAASAAAASAASGS) shows a compositional bias: low complexity. The interval 1–49 (MAASAAAASAAAASAASGSPGPGEGSAGGEKRSTAPSAAASASASAAAS) is disordered. Alanine 2 is modified (N-acetylalanine). Phosphoserine occurs at positions 19 and 26. Residue lysine 31 forms a Glycyl lysine isopeptide (Lys-Gly) (interchain with G-Cter in SUMO2) linkage. Residues 35–49 (APSAAASASASAAAS) show a composition bias toward low complexity. Serine 50 carries the post-translational modification Phosphoserine. An RING-type zinc finger spans residues 65 to 121 (CGVCRERLRPEREPRLLPCLHSACSACLGPAAPAAANSSGDGGAAGDGTVVDCPVCK). The tract at residues 65-376 (CGVCRERLRP…LIYFQLHRAL (312 aa)) is RBCC domain. Lysine 127 is covalently cross-linked (Glycyl lysine isopeptide (Lys-Gly) (interchain with G-Cter in SUMO2)). Serine 138 carries the phosphoserine modification. The B box-type 1; atypical zinc finger occupies 148–195 (DANQCCTSCEDNAPATSYCVECSEPLCETCVEAHQRVKYTKDHTVRST). Residues cysteine 153, cysteine 156, cysteine 177, and histidine 181 each contribute to the Zn(2+) site. Lysine 199 is covalently cross-linked (Glycyl lysine isopeptide (Lys-Gly) (interchain with G-Cter in SUMO2)). The B box-type 2 zinc-finger motif lies at 204–245 (ERTVYCNVHKHEPLVLFCESCDTLTCRDCQLNAHKDHQYQFL). Zn(2+) is bound by residues cysteine 209, histidine 212, cysteine 232, and histidine 237. The leucine zipper alpha helical coiled-coil region stretch occupies residues 246 to 376 (EDAVRNQRKL…LIYFQLHRAL (131 aa)). The segment at 247 to 376 (DAVRNQRKLL…LIYFQLHRAL (130 aa)) is interaction with MAGEC2. Glycyl lysine isopeptide (Lys-Gly) (interchain with G-Cter in SUMO2) cross-links involve residues lysine 254 and lysine 261. Lysine 266 carries the post-translational modification N6-acetyllysine. Lysine 272 is covalently cross-linked (Glycyl lysine isopeptide (Lys-Gly) (interchain with G-Cter in SUMO2)). Lysine 304 is subject to N6-acetyllysine; alternate. A Glycyl lysine isopeptide (Lys-Gly) (interchain with G-Cter in SUMO2); alternate cross-link involves residue lysine 304. Residue lysine 319 forms a Glycyl lysine isopeptide (Lys-Gly) (interchain with G-Cter in SUMO2) linkage. N6-acetyllysine is present on lysine 340. Lysine 366 participates in a covalent cross-link: Glycyl lysine isopeptide (Lys-Gly) (interchain with G-Cter in SUMO2). An involved in binding PPP1CA region spans residues 366–370 (KLIYF). Residue lysine 377 is modified to N6-acetyllysine; alternate. Lysine 377 participates in a covalent cross-link: Glycyl lysine isopeptide (Lys-Gly) (interchain with G-Cter in SUMO2); alternate. Lysine 377 participates in a covalent cross-link: Glycyl lysine isopeptide (Lys-Gly) (interchain with G-Cter in SUMO1); alternate. Lysine 407 is covalently cross-linked (Glycyl lysine isopeptide (Lys-Gly) (interchain with G-Cter in SUMO2)). The segment at 411–480 (ERPGTNSTGP…SRSGEGEVSG (70 aa)) is disordered. The residue at position 417 (serine 417) is a Phosphoserine. Lysine 434 participates in a covalent cross-link: Glycyl lysine isopeptide (Lys-Gly) (interchain with G-Cter in SUMO2). Positions 434–443 (KQGSGSSQPM) are enriched in polar residues. Serine 437, serine 439, and serine 453 each carry phosphoserine. A Glycyl lysine isopeptide (Lys-Gly) (interchain with G-Cter in SUMO2); alternate cross-link involves residue lysine 469. Lysine 469 is covalently cross-linked (Glycyl lysine isopeptide (Lys-Gly) (interchain with G-Cter in SUMO1); alternate). Arginine 470 carries the citrulline modification. Serine 471 carries the phosphoserine modification. Position 472 is a citrulline (arginine 472). Serine 473, serine 479, and serine 489 each carry phosphoserine. Residues 476–513 (GEVSGLMRKVPRVSLERLDLDLTADSQPPVFKVFPGST) are HP1 box. Residues 481–494 (LMRKVPRVSLERLD) carry the PxVxL motif motif. The residue at position 498 (threonine 498) is a Phosphothreonine. Serine 501 carries the phosphoserine modification. Lysine 507 participates in a covalent cross-link: Glycyl lysine isopeptide (Lys-Gly) (interchain with G-Cter in SUMO2). Threonine 541 is modified (phosphothreonine). Lysine 554 participates in a covalent cross-link: Glycyl lysine isopeptide (Lys-Gly) (interchain with G-Cter in SUMO2); alternate. Lysine 554 is covalently cross-linked (Glycyl lysine isopeptide (Lys-Gly) (interchain with G-Cter in SUMO); alternate). Residue lysine 575 forms a Glycyl lysine isopeptide (Lys-Gly) (interchain with G-Cter in SUMO2) linkage. The interval 584–618 (GPGAEGPRLASPSGSTSSGLEVVAPEGTSAPGGGP) is disordered. Phosphoserine is present on serine 594. Residues 625–672 (ATICRVCQKPGDLVMCNQCEFCFHLDCHLPALQDVPGEEWSCSLCHVL) form a PHD-type zinc finger. Lysine 676 is covalently cross-linked (Glycyl lysine isopeptide (Lys-Gly) (interchain with G-Cter in SUMO)). A phosphoserine mark is found at serine 683, serine 689, and serine 697. The region spanning 695–799 (KLSPANQRKC…RFFETRMNEA (105 aa)) is the Bromo domain. Lysine 750 is covalently cross-linked (Glycyl lysine isopeptide (Lys-Gly) (interchain with G-Cter in SUMO2); alternate). A Glycyl lysine isopeptide (Lys-Gly) (interchain with G-Cter in SUMO1); alternate cross-link involves residue lysine 750. Lysine 750 participates in a covalent cross-link: Glycyl lysine isopeptide (Lys-Gly) (interchain with G-Cter in SUMO); alternate. Serine 752 is subject to Phosphoserine. Residue tyrosine 755 is modified to Phosphotyrosine. Serine 757 is subject to Phosphoserine. N6-acetyllysine; alternate occurs at positions 770, 774, and 779. Residues lysine 770, lysine 774, and lysine 779 each participate in a glycyl lysine isopeptide (Lys-Gly) (interchain with G-Cter in SUMO2); alternate cross-link. A Glycyl lysine isopeptide (Lys-Gly) (interchain with G-Cter in SUMO1); alternate cross-link involves residue lysine 779. Serine 784 carries the phosphoserine modification. Lysine 804 participates in a covalent cross-link: Glycyl lysine isopeptide (Lys-Gly) (interchain with G-Cter in SUMO2); alternate. Residue lysine 804 forms a Glycyl lysine isopeptide (Lys-Gly) (interchain with G-Cter in SUMO); alternate linkage. The interval 815–835 (MSLPGAGLSSQELSGGPGDGP) is disordered. The residue at position 824 (serine 824) is a Phosphoserine; by ATM and ATR and dsDNA kinase.

It belongs to the TRIM/RBCC family. As to quaternary structure, interacts with SETX. Oligomer; the RBCC domain homotrimerizes and interacts with one molecule of KRAB to form the KRAB-KAP1 corepressor complex. Binding to a KRAB domain is an absolute requirement for silencing gene expression. Interacts with CEBPB and NR3C1. Interacts with a number of KRAB-ZFP proteins including ZNF10, ZFP53, ZFP68, ZNF382 and ZNF256. Interacts with NCOR1, NR3C1 and CHD3. Interacts with CEBPB (via the RING-type and PHD-type zinc fingers). Component of a ternary complex that includes TRIM28, a HP1 protein (CBX1, CBX3 OR CBX5), a KRAB domain-containing protein, and DNA. Interacts with CBX5 (via the PxVxL motif); the interaction occurs in interphase nuclei and competes for binding POGZ. Interacts with POGZ; the interaction competes for interaction with CBX5. Interacts with SETDB1; the interaction is enhanced by KAP1 sumoylation, stimulates SETDB1 histone methyltransferase activity and gene silencing. Interacts (via the PHD-type zinc finger) with UBE2I; the interaction is required for sumoylation and repressor activity. Component of the TRIM28/KAP1-ERBB4-MDM2 complex involved in connecting growth factor and DNA damage responses. Interacts directly with ERBB4; the interaction represses ERBB4-mediated transcription activity. Interacts with MDM2; the interaction contributes to p53/TP53 inactivation. Component of the TRIM28/KAP1-MDM2-p53/TP53; involved in regulating p53/TP53 stabilization and activity. Interacts (via the leucine zipper alpha helical coiled-coil) with E2F1 (central region); the interaction inhibits E2F1 acetylation and transcriptional activity. Interacts with PPP1CA; the interaction dephosphorylates TRIM28 at Ser-824 and forms a complex at the p21 promoter site. Interacts with PPP1CB; the interaction is weak but is increased on dephosphorylation at Ser-824. Interacts with FES/FPS. Interacts with SMARCAD1. Interacts with, and sumoylates IRF7. Interacts with MAGEC2. Part of a complex composed of TRIM28, HDAC1, HDAC2 and EHMT2. Interacts with AICDA. Interacts (via the RBCC domain) with KOX1 (via the KRAB domain), ZNF268 (via the KRAB domain) and ZNF300 (via the KRAB domain); the interactions increase KOX1, ZNF268 and ZNF300 nuclear localization activities. The large PER complex involved in the histone methylation is composed of at least PER2, CBX3, TRIM28, SUV39H1 and/or SUV39H2; CBX3 mediates the formation of the complex. Interacts with isoform 2 of ZFP90. Forms a complex with FOXP3 in the presence of isoform 2 of ZFP90. Interacts with NR4A3; the interactions potentiates NR4A3 activity on NurRE promoter. Interacts (unphosphorylated or phosphorylated form) with ZBTB1 (via BTB domain). Probably part of a corepressor complex containing ZNF304, TRIM28, SETDB1 and DNMT1. Interacts with ATRX. Forms a complex with ATRX, SETDB1 and ZNF274. Interacts with ZFP568; the interaction mediates ZFP568 transcriptional repression activity. Interacts with RRP1B. Interacts with CRY1. Interacts with ZNF263; recruited to the SIX3 promoter along with other proteins involved in chromatin modification and transcriptional corepression where it contributes to transcriptional repression. Interacts with CYREN (via XLF motif). Interacts with TRIM17; this interaction prevents TRIM28 activity. Interacts with ZNF746. Interacts with PHF13. Interacts with ZNF354C. Interacts with ZNF432; the interaction is independent of PARP1. (Microbial infection) Interacts with herpes virus 8 protein LANA1; this interaction facilitates establishment of viral latency. In terms of processing, ATM-induced phosphorylation on Ser-824 represses sumoylation leading to the de-repression of expression of a subset of genes involved in cell cycle control and apoptosis in response to genotoxic stress. Dephosphorylation by the phosphatases, PPP1CA and PP1CB forms, allows sumoylation and expression of TRIM28 target genes. Post-translationally, sumoylation/desumoylation events regulate TRIM28-mediated transcriptional repression. Sumoylation is required for interaction with CHD3 and SETDB1 and the corepressor activity. Represses and is repressed by Ser-824 phosphorylation. Enhances the TRIM28 corepressor activity, inhibiting transcriptional activity of a number of genes including GADD45A and CDKN1A/p21. Lys-554, Lys-779 and Lys-804 are the major sites of sumoylation. In response to Dox-induced DNA damage, enhanced phosphorylation on Ser-824 prevents sumoylation and allows de-repression of CDKN1A/p21. Auto-ubiquitinated; enhanced by MAGEA2 and MAGEC2. In terms of processing, citrullinated by PADI4. Post-translationally, ADP-ribosylated by SIRT6, promoting TRIM28/KAP1 interaction with CBX5, thereby contributing to the packaging of LINE-1 retrotransposon elements into transcriptionally repressive heterochromatin. As to expression, expressed in all tissues tested including spleen, thymus, prostate, testis, ovary, small intestine, colon and peripheral blood leukocytes.

The protein localises to the nucleus. It catalyses the reaction S-ubiquitinyl-[E2 ubiquitin-conjugating enzyme]-L-cysteine + [acceptor protein]-L-lysine = [E2 ubiquitin-conjugating enzyme]-L-cysteine + N(6)-ubiquitinyl-[acceptor protein]-L-lysine.. Its pathway is protein modification; protein sumoylation. Nuclear corepressor for KRAB domain-containing zinc finger proteins (KRAB-ZFPs). Mediates gene silencing by recruiting CHD3, a subunit of the nucleosome remodeling and deacetylation (NuRD) complex, and SETDB1 (which specifically methylates histone H3 at 'Lys-9' (H3K9me)) to the promoter regions of KRAB target genes. Enhances transcriptional repression by coordinating the increase in H3K9me, the decrease in histone H3 'Lys-9 and 'Lys-14' acetylation (H3K9ac and H3K14ac, respectively) and the disposition of HP1 proteins to silence gene expression. Recruitment of SETDB1 induces heterochromatinization. May play a role as a coactivator for CEBPB and NR3C1 in the transcriptional activation of ORM1. Also a corepressor for ERBB4. Inhibits E2F1 activity by stimulating E2F1-HDAC1 complex formation and inhibiting E2F1 acetylation. May serve as a partial backup to prevent E2F1-mediated apoptosis in the absence of RB1. Important regulator of CDKN1A/p21(CIP1). Has E3 SUMO-protein ligase activity toward itself via its PHD-type zinc finger. Also specifically sumoylates IRF7, thereby inhibiting its transactivation activity. Ubiquitinates p53/TP53 leading to its proteasomal degradation; the function is enhanced by MAGEC2 and MAGEA2, and possibly MAGEA3 and MAGEA6. Mediates the nuclear localization of KOX1, ZNF268 and ZNF300 transcription factors. In association with isoform 2 of ZFP90, is required for the transcriptional repressor activity of FOXP3 and the suppressive function of regulatory T-cells (Treg). Probably forms a corepressor complex required for activated KRAS-mediated promoter hypermethylation and transcriptional silencing of tumor suppressor genes (TSGs) or other tumor-related genes in colorectal cancer (CRC) cells. Required to maintain a transcriptionally repressive state of genes in undifferentiated embryonic stem cells (ESCs). In ESCs, in collaboration with SETDB1, is also required for H3K9me3 and silencing of endogenous and introduced retroviruses in a DNA-methylation independent-pathway. Associates at promoter regions of tumor suppressor genes (TSGs) leading to their gene silencing. The SETDB1-TRIM28-ZNF274 complex may play a role in recruiting ATRX to the 3'-exons of zinc-finger coding genes with atypical chromatin signatures to establish or maintain/protect H3K9me3 at these transcriptionally active regions. Functionally, (Microbial infection) Plays a critical role in the shutdown of lytic gene expression during the early stage of herpes virus 8 primary infection. This inhibition is mediated through interaction with herpes virus 8 protein LANA1. The sequence is that of Transcription intermediary factor 1-beta from Homo sapiens (Human).